Consider the following 434-residue polypeptide: Adenylosuccinate synthetase (434 aa).

Residues 22 to 28 (GDEGKGK) and 50 to 52 (GHT) each bind GTP. D23 acts as the Proton acceptor in catalysis. Residues D23 and G50 each coordinate Mg(2+). IMP is bound by residues 23–26 (DEGK), 48–51 (NAGH), T139, R153, Q234, T249, and R313. H51 (proton donor) is an active-site residue. Substrate is bound at residue 309 to 315 (ATTGRKR). GTP-binding positions include R315, 341–343 (KLD), and 423–425 (SVG).

This sequence belongs to the adenylosuccinate synthetase family. In terms of assembly, homodimer. Mg(2+) is required as a cofactor.

It localises to the cytoplasm. The catalysed reaction is IMP + L-aspartate + GTP = N(6)-(1,2-dicarboxyethyl)-AMP + GDP + phosphate + 2 H(+). The protein operates within purine metabolism; AMP biosynthesis via de novo pathway; AMP from IMP: step 1/2. Its function is as follows. Plays an important role in the de novo pathway of purine nucleotide biosynthesis. Catalyzes the first committed step in the biosynthesis of AMP from IMP. This chain is Adenylosuccinate synthetase, found in Chlorobium chlorochromatii (strain CaD3).